The following is a 216-amino-acid chain: ATP phosphoribosyltransferase (216 aa).

Belongs to the ATP phosphoribosyltransferase family. Short subfamily. Heteromultimer composed of HisG and HisZ subunits.

The protein localises to the cytoplasm. It catalyses the reaction 1-(5-phospho-beta-D-ribosyl)-ATP + diphosphate = 5-phospho-alpha-D-ribose 1-diphosphate + ATP. Its pathway is amino-acid biosynthesis; L-histidine biosynthesis; L-histidine from 5-phospho-alpha-D-ribose 1-diphosphate: step 1/9. Functionally, catalyzes the condensation of ATP and 5-phosphoribose 1-diphosphate to form N'-(5'-phosphoribosyl)-ATP (PR-ATP). Has a crucial role in the pathway because the rate of histidine biosynthesis seems to be controlled primarily by regulation of HisG enzymatic activity. This is ATP phosphoribosyltransferase from Chromohalobacter salexigens (strain ATCC BAA-138 / DSM 3043 / CIP 106854 / NCIMB 13768 / 1H11).